We begin with the raw amino-acid sequence, 147 residues long: Transthyretin (147 aa).

An N-terminal signal peptide occupies residues Met1–Ala20. Cys30 carries the post-translational modification Sulfocysteine. Lys35 serves as a coordination point for L-thyroxine. Glu62 bears the 4-carboxyglutamate mark. Position 72 is a phosphoserine (Ser72). Glu74 contributes to the L-thyroxine binding site. Asn118 carries an N-linked (GlcNAc...) asparagine glycan. Position 137 (Ser137) interacts with L-thyroxine.

Belongs to the transthyretin family. In terms of assembly, homotetramer. Dimer of dimers. In the homotetramer, subunits assemble around a central channel that can accommodate two ligand molecules. Interacts with RBP4. In terms of processing, sulfonation of the reactive cysteine Cys-30 enhances the stability of the native conformation of TTR, avoiding misassembly of the protein leading to amyloid formation. In terms of tissue distribution, detected in brain.

It localises to the secreted. In terms of biological role, thyroid hormone-binding protein. Probably transports thyroxine from the bloodstream to the brain. The chain is Transthyretin (TTR) from Pan troglodytes (Chimpanzee).